The sequence spans 194 residues: Inosine triphosphate pyrophosphatase (194 aa).

Alanine 2 carries the post-translational modification N-acetylalanine. Residue 14-19 participates in ITP binding; sequence TGNAKK. Position 44 (glutamate 44) interacts with Mg(2+). Residues lysine 56, 72 to 73, lysine 89, 149 to 152, lysine 172, and 177 to 178 contribute to the ITP site; these read DT, FGWD, and HR.

It belongs to the HAM1 NTPase family. As to quaternary structure, homodimer. Mg(2+) is required as a cofactor. In terms of tissue distribution, ubiquitous. Highly expressed in heart, liver, sex glands, thyroid and adrenal gland.

The protein resides in the cytoplasm. It carries out the reaction ITP + H2O = IMP + diphosphate + H(+). It catalyses the reaction dITP + H2O = dIMP + diphosphate + H(+). The enzyme catalyses XTP + H2O = XMP + diphosphate + H(+). The catalysed reaction is N(6)-hydroxy-dATP + H2O = N(6)-hydroxy-dAMP + diphosphate + H(+). Pyrophosphatase that hydrolyzes the non-canonical purine nucleotides inosine triphosphate (ITP), deoxyinosine triphosphate (dITP) as well as 2'-deoxy-N-6-hydroxylaminopurine triphosphate (dHAPTP) and xanthosine 5'-triphosphate (XTP) to their respective monophosphate derivatives. The enzyme does not distinguish between the deoxy- and ribose forms. Probably excludes non-canonical purines from RNA and DNA precursor pools, thus preventing their incorporation into RNA and DNA and avoiding chromosomal lesions. The polypeptide is Inosine triphosphate pyrophosphatase (Homo sapiens (Human)).